A 141-amino-acid polypeptide reads, in one-letter code: Putative pre-16S rRNA nuclease (141 aa).

The protein belongs to the YqgF nuclease family.

It localises to the cytoplasm. Could be a nuclease involved in processing of the 5'-end of pre-16S rRNA. In Aliivibrio fischeri (strain ATCC 700601 / ES114) (Vibrio fischeri), this protein is Putative pre-16S rRNA nuclease.